The following is an 86-amino-acid chain: Small ribosomal subunit protein bS20 (86 aa).

It belongs to the bacterial ribosomal protein bS20 family.

Functionally, binds directly to 16S ribosomal RNA. This Buchnera aphidicola subsp. Cinara cedri (strain Cc) protein is Small ribosomal subunit protein bS20.